A 202-amino-acid polypeptide reads, in one-letter code: Small ribosomal subunit protein uS4c-1 (202 aa).

The S4 RNA-binding domain maps to 90-152 (MRLDNIVLRA…NKSRQLIDLN (63 aa)).

The protein belongs to the universal ribosomal protein uS4 family. In terms of assembly, part of the 30S ribosomal subunit. Contacts protein S5. The interaction surface between S4 and S5 is involved in control of translational fidelity.

The protein localises to the plastid. It localises to the chloroplast. Its function is as follows. One of the primary rRNA binding proteins, it binds directly to 16S rRNA where it nucleates assembly of the body of the 30S subunit. Functionally, with S5 and S12 plays an important role in translational accuracy. This chain is Small ribosomal subunit protein uS4c-1, found in Cyanidium caldarium (Red alga).